The chain runs to 213 residues: Uridine kinase (213 aa).

ATP is bound at residue 13-20 (GASASGKS).

This sequence belongs to the uridine kinase family.

The protein localises to the cytoplasm. The catalysed reaction is uridine + ATP = UMP + ADP + H(+). It carries out the reaction cytidine + ATP = CMP + ADP + H(+). It participates in pyrimidine metabolism; CTP biosynthesis via salvage pathway; CTP from cytidine: step 1/3. Its pathway is pyrimidine metabolism; UMP biosynthesis via salvage pathway; UMP from uridine: step 1/1. The protein is Uridine kinase of Histophilus somni (strain 129Pt) (Haemophilus somnus).